A 187-amino-acid chain; its full sequence is Calcium and integrin-binding family member 2 (187 aa).

3 EF-hand domains span residues 66-101 (KENP…LSEM), 103-138 (PREL…LTKE), and 144-179 (EVNL…APDF). Residues aspartate 157, aspartate 159, aspartate 161, lysine 163, and aspartate 168 each coordinate Ca(2+).

In terms of assembly, monomer. Homodimer. As to expression, enriched in central and striolar hair cells.

It localises to the cytoplasm. The protein localises to the cell projection. Its subcellular location is the stereocilium. It is found in the photoreceptor inner segment. The protein resides in the cilium. It localises to the photoreceptor outer segment. The protein localises to the cell membrane. Its subcellular location is the sarcolemma. Its function is as follows. Calcium- and integrin-binding protein. Plays a role in intracellular calcium homeostasis. Critical for proper photoreceptor cell maintenance and function. Essential for development, maintenance and function of mechanosensory hair cells. This Danio rerio (Zebrafish) protein is Calcium and integrin-binding family member 2.